The sequence spans 691 residues: Cyclic nucleotide-gated channel alpha-1 (691 aa).

Residues 1–168 lie on the Cytoplasmic side of the membrane; that stretch reads MKKNIINTWY…PAGNMYYNWL (168 aa). A disordered region spans residues 31–151; sequence ENGARSSFSD…KGKDKKEEEK (121 aa). Positions 39–56 are enriched in acidic residues; it reads SDDDGDDDSASMFEESEN. Composition is skewed to basic and acidic residues over residues 57 to 76 and 112 to 151; these read ETPH…DPSQ and SKSG…EEEK. A helical transmembrane segment spans residues 169-190; that stretch reads FCITLPVMYNWTMVIARACFDE. The Extracellular segment spans residues 191–200; the sequence is LQSDYLEYWI. Residues 201–221 traverse the membrane as a helical segment; that stretch reads IFDYLSDIVYLLDMFVRTRTG. Over 222 to 246 the chain is Cytoplasmic; sequence YLEQGLLVREEAKLIEKYKSNLQFK. The chain crosses the membrane as a helical span at residues 247-265; that stretch reads LDFLSVIPTDLLYFKLGWN. The Extracellular segment spans residues 266 to 270; the sequence is YPEIR. Residues 271-289 traverse the membrane as a helical segment; that stretch reads LNRLLRISRMFEFFQRTET. Residues 290–296 lie on the Cytoplasmic side of the membrane; the sequence is RTNYPNI. The ion conduction pathway stretch occupies residues 294-402; it reads PNIFRISNLV…GNIGSMISNM (109 aa). Residues 297 to 320 form a helical membrane-spanning segment; it reads FRISNLVMYIVIIIHWNACVYFSI. Topologically, residues 321–343 are extracellular; that stretch reads SKAIGFGNDTWVYPDVNDPEFGR. Asparagine 328 carries N-linked (GlcNAc...) asparagine glycosylation. 2 helical membrane passes run 344–378 and 379–403; these read LARK…VFVV and VDFL…SNMN. The segment at 361-364 is selectivity filter; that stretch reads TIGE. Positions 404-480 are C-linker; it reads AARAEFQARI…DTLKKVRIFA (77 aa). Over 404-691 the chain is Cytoplasmic; the sequence is AARAEFQARI…ESRPLDSTQD (288 aa). Residues 484–604 form a cyclic nucleotide-binding domain region; that stretch reads AGLLVELVLK…EEKGKQILMK (121 aa). 3',5'-cyclic GMP is bound by residues glycine 544, serine 547, arginine 560, and threonine 561. 3',5'-cyclic AMP contacts are provided by arginine 560 and threonine 561. A coiled-coil region spans residues 622 to 676; that stretch reads LEEKVTRMEGSVDLLQTRFARILAEYESMQQKLKQRLTKVERFLKPIIDTEFSAL.

It belongs to the cyclic nucleotide-gated cation channel (TC 1.A.1.5) family. CNGA1 subfamily. As to quaternary structure, forms heterotetrameric channels composed of CNGA1 and CNGB1 subunits with 3:1 stoichiometry. May also form cyclic nucleotide-activated homotetrameric channels, that are efficiently activated by saturating cGMP, but poorly activated by saturating cAMP compared to the heterotetramer with CNGB1. The channel binds Ca(2+)-bound CALM1 via CaM1 and CaM2 regions of the CNGB1 subunit; this interaction modulates the affinity of the channel for cNMPs in response to intracellular Ca(2+) levels.

The protein resides in the cell membrane. It catalyses the reaction Ca(2+)(in) = Ca(2+)(out). The catalysed reaction is Na(+)(in) = Na(+)(out). It carries out the reaction K(+)(in) = K(+)(out). The enzyme catalyses NH4(+)(in) = NH4(+)(out). It catalyses the reaction Rb(+)(in) = Rb(+)(out). The catalysed reaction is Li(+)(in) = Li(+)(out). It carries out the reaction Cs(+)(in) = Cs(+)(out). In terms of biological role, pore-forming subunit of the rod cyclic nucleotide-gated channel. Mediates rod photoresponses at dim light converting transient changes in intracellular cGMP levels into electrical signals. In the dark, cGMP levels are high and keep the channel open enabling a steady inward current carried by Na(+) and Ca(2+) ions that leads to membrane depolarization and neurotransmitter release from synaptic terminals. Upon photon absorption cGMP levels decline leading to channel closure and membrane hyperpolarization that ultimately slows neurotransmitter release and signals the presence of light, the end point of the phototransduction cascade. Conducts cGMP- and cAMP-gated ion currents, with permeability for monovalent and divalent cations. The selectivity for Ca(2+) over Na(+) increases with cGMP concentrations, whereas the selectivity among monovalent ions is independent of the cGMP levels. The chain is Cyclic nucleotide-gated channel alpha-1 from Canis lupus familiaris (Dog).